The sequence spans 129 residues: Large ribosomal subunit protein bL12 (129 aa).

Belongs to the bacterial ribosomal protein bL12 family. In terms of assembly, homodimer. Part of the ribosomal stalk of the 50S ribosomal subunit. Forms a multimeric L10(L12)X complex, where L10 forms an elongated spine to which 2 to 4 L12 dimers bind in a sequential fashion. Binds GTP-bound translation factors.

Its function is as follows. Forms part of the ribosomal stalk which helps the ribosome interact with GTP-bound translation factors. Is thus essential for accurate translation. This Solidesulfovibrio magneticus (strain ATCC 700980 / DSM 13731 / RS-1) (Desulfovibrio magneticus) protein is Large ribosomal subunit protein bL12.